Here is a 413-residue protein sequence, read N- to C-terminus: uncharacterized protein (413 aa).

This is an uncharacterized protein from Bacillus subtilis (strain 168).